The following is a 260-amino-acid chain: Dolichol-phosphate mannosyltransferase subunit 1 (260 aa).

Positions 1–20 (MAAEEASRSSPRFRREPKGR) are disordered. Position 2 is an N-acetylalanine (Ala-2). The residue at position 9 (Ser-9) is a Phosphoserine. 11 residues coordinate GDP-alpha-D-mannose: Pro-32, Tyr-34, Glu-36, Ile-63, Asp-65, Asp-118, Ala-119, Asp-120, Arg-147, Arg-234, and Lys-240. Asp-120 contributes to the Mg(2+) binding site. Asp-120 contributes to the Mn(2+) binding site.

Belongs to the glycosyltransferase 2 family. Component of the dolichol-phosphate mannose (DPM) synthase complex composed of DPM1, DPM2 and DPM3; within the complex, directly interacts with DPM3. This interaction may stabilize DPM1. It depends on Mg(2+) as a cofactor. The cofactor is Mn(2+). Requires Ca(2+) as cofactor.

It is found in the endoplasmic reticulum. It catalyses the reaction a di-trans,poly-cis-dolichyl phosphate + GDP-alpha-D-mannose = a di-trans,poly-cis-dolichyl beta-D-mannosyl phosphate + GDP. The protein operates within protein modification; protein glycosylation. Functionally, transfers mannose from GDP-mannose to dolichol monophosphate to form dolichol phosphate mannose (Dol-P-Man) which is the mannosyl donor in pathways leading to N-glycosylation, glycosyl phosphatidylinositol membrane anchoring, and O-mannosylation of proteins; catalytic subunit of the dolichol-phosphate mannose (DPM) synthase complex. The chain is Dolichol-phosphate mannosyltransferase subunit 1 (DPM1) from Bos taurus (Bovine).